The chain runs to 1363 residues: Clustered mitochondria protein homolog (1363 aa).

TPR repeat units follow at residues 29-63 and 120-154; these read LPSFFNVGDDYLTIPSSYEENIADLKQALNIIVLC and KEKSYNLASIYEQISRFREVIGLHYIDRLSNDIGS. The tract at residues 172 to 191 is disordered; the sequence is KEAKKEESTEKEQQEKEELS. A TPR 3 repeat occupies 283-316; sequence STINFNPTIKINEKGKFNKSYLLYDLVCQLSPLF. The 271-residue stretch at 361-631 folds into the Clu domain; the sequence is DLSRSQLSSL…RTTPRDIEFI (271 aa). A disordered region spans residues 521–544; the sequence is PVITSPTTDAEGKNEAEEPESEPV. The TPR 4 repeat unit spans residues 548-581; that stretch reads VYGLSSDGSRILEDKSFEEPLKQIGDFFHLKPHK. A compositionally biased stretch (basic and acidic residues) spans 799–832; the sequence is AKAEKKREEEKEKEEKEATESEDKKEKKEDKEDA. The interval 799-844 is disordered; sequence AKAEKKREEEKEKEEKEATESEDKKEKKEDKEDAEKEEAEAEEEVP. Acidic residues predominate over residues 833–842; the sequence is EKEEAEAEEE. TPR repeat units lie at residues 1057–1090, 1141–1174, 1183–1216, and 1225–1258; these read VEEIYSNARSHLVQGNKEMGMALFNELLAINESI, ITAYMNSAYYESSNEQYLNSLKLYKEAMNTWSLV, INTLTNLSESLLKIKAYDSALELLQEALEITKKL, and GFIYYRIANIVVTLNKFKESKELFDKAYDIFMKL. The segment at 1291–1363 is disordered; the sequence is QQETQKKSKT…SGSKKSNKKK (73 aa). Polar residues predominate over residues 1330–1342; it reads PPQSNPEIANQSI.

Belongs to the CLU family. As to quaternary structure, may associate with the eukaryotic translation initiation factor 3 (eIF-3) complex.

The protein localises to the cytoplasm. In terms of biological role, mRNA-binding protein involved in proper cytoplasmic distribution of mitochondria. The polypeptide is Clustered mitochondria protein homolog (Candida albicans (strain SC5314 / ATCC MYA-2876) (Yeast)).